The chain runs to 357 residues: Putative DENN domain-containing protein 10 B (357 aa).

Residues Met-1–Asn-140 enclose the uDENN domain. In terms of domain architecture, cDENN spans Ile-159–Gln-299. The 57-residue stretch at Ile-301–Ile-357 folds into the dDENN domain.

It belongs to the DENND10 family.

It localises to the late endosome. In terms of biological role, may be a guanine nucleotide exchange factor (GEF). The polypeptide is Putative DENN domain-containing protein 10 B (Homo sapiens (Human)).